Here is a 416-residue protein sequence, read N- to C-terminus: Squamosa promoter-binding-like protein 8 (416 aa).

The disordered stretch occupies residues 11–51 (SSCDDFGYNATPPPPPSLLPIMDQDGGGGSIQRDHHQHHNH). An SBP-type zinc finger spans residues 182–260 (PPRCQAEGCK…ADHNRRRRKS (79 aa)). Zn(2+) contacts are provided by cysteine 185, cysteine 190, cysteine 207, histidine 210, cysteine 227, cysteine 230, histidine 234, and cysteine 246. A Bipartite nuclear localization signal motif is present at residues 243-259 (KKSCRKRLADHNRRRRK). The segment at 250–299 (LADHNRRRRKSKPSDGEHSGEKRRAQANKSAATKDKAGSSSKNAGIGDGF) is disordered. Residues 261 to 273 (KPSDGEHSGEKRR) are compositionally biased toward basic and acidic residues.

As to expression, expressed in stems, leaf sheaths, and young panicles. Weakly expressed in ligules, auricles, and leaf sheaths at the basal region.

The protein resides in the nucleus. Functionally, probable transcription factor that plays an important role in building the laminar joint between leaf blade and leaf sheath boundary, thereby controlling ligule and auricle development. The protein is Squamosa promoter-binding-like protein 8 (SPL8) of Oryza sativa subsp. japonica (Rice).